Here is a 134-residue protein sequence, read N- to C-terminus: Fluoride-specific ion channel FluC (134 aa).

Transmembrane regions (helical) follow at residues 7–27 (LAVA…TIMA), 38–58 (GTLL…IVLV), 69–89 (LFLF…AAES), and 110–130 (VGSL…LLGH). 2 residues coordinate Na(+): glycine 77 and threonine 80.

This sequence belongs to the fluoride channel Fluc/FEX (TC 1.A.43) family.

Its subcellular location is the cell inner membrane. The catalysed reaction is fluoride(in) = fluoride(out). With respect to regulation, na(+) is not transported, but it plays an essential structural role and its presence is essential for fluoride channel function. Fluoride-specific ion channel. Important for reducing fluoride concentration in the cell, thus reducing its toxicity. This chain is Fluoride-specific ion channel FluC, found in Legionella pneumophila (strain Paris).